Reading from the N-terminus, the 398-residue chain is Lysophospholipid transporter LplT (398 aa).

The next 11 membrane-spanning stretches (helical) occupy residues 19–39 (VIAA…ATLA), 53–73 (ILQM…GQVA), 91–111 (LGAA…LVGI), 139–159 (LMEA…GVLA), 164–184 (IAAL…NLFI), 227–247 (LFWG…PVAL), 257–277 (YLNA…AKLV), 281–301 (TVAR…IFSL), 304–324 (ALLP…FFVV), 350–370 (GENS…LVGI), and 372–392 (VVAI…ALWI).

This sequence belongs to the major facilitator superfamily. LplT (TC 2.A.1.42) family.

The protein localises to the cell inner membrane. Catalyzes the facilitated diffusion of 2-acyl-glycero-3-phosphoethanolamine (2-acyl-GPE) into the cell. The chain is Lysophospholipid transporter LplT from Citrobacter koseri (strain ATCC BAA-895 / CDC 4225-83 / SGSC4696).